Consider the following 522-residue polypeptide: Anthranilate synthase component 1 (522 aa).

L-tryptophan contacts are provided by residues S40 and 292–294; that span reads PYM. Residue 329 to 330 participates in chorismate binding; that stretch reads GT. E362 provides a ligand contact to Mg(2+). Residues Y450, R470, 484 to 486, and G486 contribute to the chorismate site; that span reads GAG. E499 contributes to the Mg(2+) binding site.

The protein belongs to the anthranilate synthase component I family. Heterotetramer consisting of two non-identical subunits: a beta subunit (TrpG) and a large alpha subunit (TrpE). It depends on Mg(2+) as a cofactor.

It carries out the reaction chorismate + L-glutamine = anthranilate + pyruvate + L-glutamate + H(+). It participates in amino-acid biosynthesis; L-tryptophan biosynthesis; L-tryptophan from chorismate: step 1/5. Its activity is regulated as follows. Feedback inhibited by tryptophan. Functionally, part of a heterotetrameric complex that catalyzes the two-step biosynthesis of anthranilate, an intermediate in the biosynthesis of L-tryptophan. In the first step, the glutamine-binding beta subunit (TrpG) of anthranilate synthase (AS) provides the glutamine amidotransferase activity which generates ammonia as a substrate that, along with chorismate, is used in the second step, catalyzed by the large alpha subunit of AS (TrpE) to produce anthranilate. In the absence of TrpG, TrpE can synthesize anthranilate directly from chorismate and high concentrations of ammonia. This is Anthranilate synthase component 1 (trpE) from Buchnera aphidicola subsp. Baizongia pistaciae (strain Bp).